We begin with the raw amino-acid sequence, 695 residues long: Tripartite terminase subunit 1 (695 aa).

The C3H1-type zinc finger occupies 182–210; that stretch reads CLECLQEVCLTPNQGTSLQAMLPDTACSH. ATP is bound at residue 621 to 628; it reads YNRTWERE.

It belongs to the herpesviridae TRM1 protein family. As to quaternary structure, associates with TRM2 and TRM3 to form the tripartite terminase complex. Interacts with portal protein.

It localises to the host nucleus. Its function is as follows. Component of the molecular motor that translocates viral genomic DNA in empty capsid during DNA packaging. Forms a tripartite terminase complex together with TRM2 and TRM3 in the host cytoplasm. Once the complex reaches the host nucleus, it interacts with the capsid portal vertex. This portal forms a ring in which genomic DNA is translocated into the capsid. TRM1 carries an endonuclease activity that plays an important role for the cleavage of concatemeric viral DNA into unit length genomes. The polypeptide is Tripartite terminase subunit 1 (Homo sapiens (Human)).